The following is a 420-amino-acid chain: Serine--tRNA ligase (420 aa).

L-serine is bound at residue Thr-229 to Glu-231. Residue Arg-260 to Glu-262 participates in ATP binding. Glu-283 provides a ligand contact to L-serine. An ATP-binding site is contributed by Glu-347 to Ser-350. Position 381 (Ser-381) interacts with L-serine.

This sequence belongs to the class-II aminoacyl-tRNA synthetase family. Type-1 seryl-tRNA synthetase subfamily. As to quaternary structure, homodimer. The tRNA molecule binds across the dimer.

The protein localises to the cytoplasm. The catalysed reaction is tRNA(Ser) + L-serine + ATP = L-seryl-tRNA(Ser) + AMP + diphosphate + H(+). It carries out the reaction tRNA(Sec) + L-serine + ATP = L-seryl-tRNA(Sec) + AMP + diphosphate + H(+). It participates in aminoacyl-tRNA biosynthesis; selenocysteinyl-tRNA(Sec) biosynthesis; L-seryl-tRNA(Sec) from L-serine and tRNA(Sec): step 1/1. Catalyzes the attachment of serine to tRNA(Ser). Is also able to aminoacylate tRNA(Sec) with serine, to form the misacylated tRNA L-seryl-tRNA(Sec), which will be further converted into selenocysteinyl-tRNA(Sec). In Gluconobacter oxydans (strain 621H) (Gluconobacter suboxydans), this protein is Serine--tRNA ligase.